The chain runs to 485 residues: MSDSHSHSDILLCQRCNKNHASVISRKEKFCTDCFRNFVSLKQRKQMMSDQYYQDIFKVMYKDKLRSEQDAHLQNLNSKILVPLSFGSSSLVMLDILNDTLLEQSITHRGKTGFTVDVIICFHDEQIQNQIKENVSKLINAKYKENNQKIKFHLVDINQFFDNSPHLQSLVLQETDFLIKSLNLKDQSIIEKKLTLSEILDQCSDRSTYQDLLAFVTKHAIKKYAFQHDFKAILWGHSMTRLADEVISLIVKGRGSAISSSLNTDDFDENYGNKFKNLYPLKDILLTEIDAYCYNSGLHNYLINYNIQDALLVNKINQNTDKIQTNSLKNKTINELARNYFEVIEGDYSNVISTVVRTGDKLAEPKSQENFKISKCNLCMQKIYSDPSQWITSITENKGHPLETDEEKENYQRWKNYNNDKLKNSEMDFFRLNEFVKENGSKACLCYGCTITLNTFKDKSVVWPVHDDKELNSVLEDYVLTDHEE.

This sequence belongs to the CTU2/NCS2 family.

The protein resides in the cytoplasm. It functions in the pathway tRNA modification; 5-methoxycarbonylmethyl-2-thiouridine-tRNA biosynthesis. In terms of biological role, plays a central role in 2-thiolation of mcm(5)S(2)U at tRNA wobble positions of tRNA(Lys), tRNA(Glu) and tRNA(Gln). May act by forming a heterodimer with NCS6 that ligates sulfur from thiocarboxylated URM1 onto the uridine of tRNAs at wobble position. Prior mcm(5) tRNA modification by the elongator complex is required for 2-thiolation. May also be involved in protein urmylation. This chain is Cytoplasmic tRNA 2-thiolation protein 2, found in Vanderwaltozyma polyspora (strain ATCC 22028 / DSM 70294 / BCRC 21397 / CBS 2163 / NBRC 10782 / NRRL Y-8283 / UCD 57-17) (Kluyveromyces polysporus).